The chain runs to 1226 residues: DNA-directed RNA polymerase subunit beta (1226 aa).

The protein belongs to the RNA polymerase beta chain family. The RNAP catalytic core consists of 2 alpha, 1 beta, 1 beta' and 1 omega subunit. When a sigma factor is associated with the core the holoenzyme is formed, which can initiate transcription.

It carries out the reaction RNA(n) + a ribonucleoside 5'-triphosphate = RNA(n+1) + diphosphate. DNA-dependent RNA polymerase catalyzes the transcription of DNA into RNA using the four ribonucleoside triphosphates as substrates. This chain is DNA-directed RNA polymerase subunit beta, found in Leptospira borgpetersenii serovar Hardjo-bovis (strain JB197).